A 263-amino-acid polypeptide reads, in one-letter code: Hatching enzyme 1.2 (263 aa).

The first 19 residues, 1–19 (MDIRASLSILLLLFGLSQA), serve as a signal peptide directing secretion. A propeptide spans 20-64 (SPLREFEAIFVSEPETVDITTQILETNKGSSEVLFEGDVVLPKNR) (activation peptide). The region spanning 65–263 (NALICEDKSC…ILRINKLYGC (199 aa)) is the Peptidase M12A domain. 3 disulfide bridges follow: Cys-69-Cys-74, Cys-114-Cys-263, and Cys-135-Cys-155. His-163 serves as a coordination point for Zn(2+). The active site involves Glu-164. His-167 and His-173 together coordinate Zn(2+).

The cofactor is Zn(2+). In terms of tissue distribution, expressed in cells of the hatching gland.

It localises to the secreted. The enzyme catalyses Hydrolysis of the inner layer of fish egg envelope. Also hydrolysis of casein and small molecule substrates such as succinyl-Leu-Leu-Val-Tyr-|-7-(4-methyl)coumarylamide.. In terms of biological role, metalloendopeptidase which participates in the breakdown of the egg envelope at the time of hatching. Cleaves the N-terminal regions of the zona pellucia glycoproteins ZP2 and ZP3, where it specifically recognizes the peptide sequences TVQQS-|-DYLIK (major site) and KLMLK-|-APEPF (minor site). The polypeptide is Hatching enzyme 1.2 (Danio rerio (Zebrafish)).